Consider the following 438-residue polypeptide: Na(+)/H(+) antiporter NhaA (438 aa).

Transmembrane regions (helical) follow at residues 23 to 43 (FGGIFLFLNAVLAMVVANSFL), 62 to 82 (FFIGFSLHNWIDDVLMALFFL), 104 to 124 (SFPVIAAIGGMIAPGLIYFFL), 133 to 153 (GFGIPMATDIAFALGVIMLLG), 162 to 182 (VFLITLAVADDLGAIVVIALF), 185 to 205 (TNLKFAWLLGALGVVLVLAVL), 221 to 241 (VLLWFCVHQSGIHATIAAVIL), 302 to 322 (FLAPISGYFIMPLFAFANAGV), 337 to 357 (LGVILGLCLGKPLGIFLITFI), 372 to 392 (WWHILGAGLLAGIGFTMSMFI), and 410 to 430 (IAILLGSLISGIIGALYLFAL).

This sequence belongs to the NhaA Na(+)/H(+) (TC 2.A.33) antiporter family.

Its subcellular location is the cell inner membrane. It catalyses the reaction Na(+)(in) + 2 H(+)(out) = Na(+)(out) + 2 H(+)(in). Its function is as follows. Na(+)/H(+) antiporter that extrudes sodium in exchange for external protons. This chain is Na(+)/H(+) antiporter NhaA, found in Helicobacter pylori (strain ATCC 700392 / 26695) (Campylobacter pylori).